We begin with the raw amino-acid sequence, 613 residues long: Zinc metalloproteinase-disintegrin-like MTP8 (613 aa).

Residues 1–20 (MIEVLLVTICFTVFPYQGSP) form the signal peptide. Positions 21 to 191 (IILESGNVND…DETIEKISQL (171 aa)) are excised as a propeptide. The 197-residue stretch at 205 to 401 (KYIELYVVVD…VRPQCILNKP (197 aa)) folds into the Peptidase M12B domain. Position 208 (glutamate 208) interacts with Ca(2+). N-linked (GlcNAc...) asparagine glycosylation is present at asparagine 282. Residue aspartate 292 participates in Ca(2+) binding. 3 disulfides stabilise this stretch: cysteine 316-cysteine 396, cysteine 356-cysteine 380, and cysteine 358-cysteine 363. Residues histidine 341, histidine 345, and histidine 351 each coordinate Zn(2+). Ca(2+) contacts are provided by cysteine 396, asparagine 399, asparagine 414, phenylalanine 416, glutamate 418, glutamate 421, and aspartate 424. One can recognise a Disintegrin domain in the interval 409–495 (PPVCGNYFVE…KCPTDSFQRN (87 aa)). 15 disulfides stabilise this stretch: cysteine 412–cysteine 441, cysteine 423–cysteine 436, cysteine 425–cysteine 431, cysteine 435–cysteine 458, cysteine 449–cysteine 455, cysteine 454–cysteine 480, cysteine 467–cysteine 487, cysteine 474–cysteine 506, cysteine 499–cysteine 511, cysteine 518–cysteine 568, cysteine 533–cysteine 575, cysteine 543–cysteine 577, cysteine 546–cysteine 556, cysteine 563–cysteine 601, and cysteine 595–cysteine 606. Asparagine 437 is a glycosylation site (N-linked (GlcNAc...) asparagine). A D/ECD-tripeptide motif is present at residues 473–475 (DCD). Aspartate 475, leucine 476, glutamate 478, and aspartate 490 together coordinate Ca(2+). Asparagine 550 and asparagine 572 each carry an N-linked (GlcNAc...) asparagine glycan.

This sequence belongs to the venom metalloproteinase (M12B) family. P-III subfamily. Monomer. Requires Zn(2+) as cofactor. In terms of tissue distribution, expressed by the venom gland.

The protein localises to the secreted. In terms of biological role, snake venom zinc metalloproteinase that may impair hemostasis in the prey. The protein is Zinc metalloproteinase-disintegrin-like MTP8 of Drysdalia coronoides (White-lipped snake).